The following is a 277-amino-acid chain: NH(3)-dependent NAD(+) synthetase (277 aa).

An ATP-binding site is contributed by 36-43 (GLSGGIDS). Mg(2+) is bound at residue Asp-42. Position 118 (Arg-118) interacts with deamido-NAD(+). Position 138 (Thr-138) interacts with ATP. Glu-143 is a binding site for Mg(2+). Residues Lys-167 and Ser-189 each contribute to the ATP site.

This sequence belongs to the NAD synthetase family. As to quaternary structure, homodimer.

The catalysed reaction is deamido-NAD(+) + NH4(+) + ATP = AMP + diphosphate + NAD(+) + H(+). The protein operates within cofactor biosynthesis; NAD(+) biosynthesis; NAD(+) from deamido-NAD(+) (ammonia route): step 1/1. In terms of biological role, catalyzes the ATP-dependent amidation of deamido-NAD to form NAD. Uses ammonia as a nitrogen source. The protein is NH(3)-dependent NAD(+) synthetase of Chlorobium phaeovibrioides (strain DSM 265 / 1930) (Prosthecochloris vibrioformis (strain DSM 265)).